Here is a 352-residue protein sequence, read N- to C-terminus: Probable RNA methyltransferase Mpe_A3613 (352 aa).

Glu-88 acts as the Proton acceptor in catalysis. The 227-residue stretch at 91-317 (LLPRDGLCVS…TKLRRSAGQD (227 aa)) folds into the Radical SAM core domain. A disulfide bridge links Cys-98 with Cys-322. [4Fe-4S] cluster is bound by residues Cys-105, Cys-109, and Cys-112. S-adenosyl-L-methionine-binding positions include 150–151 (GE), Ser-180, 203–205 (SLH), and Asn-279. The active-site S-methylcysteine intermediate is the Cys-322.

Belongs to the radical SAM superfamily. RlmN family. It depends on [4Fe-4S] cluster as a cofactor.

It is found in the cytoplasm. The chain is Probable RNA methyltransferase Mpe_A3613 from Methylibium petroleiphilum (strain ATCC BAA-1232 / LMG 22953 / PM1).